Reading from the N-terminus, the 131-residue chain is Large-conductance mechanosensitive channel (131 aa).

3 consecutive transmembrane segments (helical) span residues 8–28 (FALK…GAFG), 30–50 (IVTS…VGGI), and 72–92 (GQFI…FMFI).

This sequence belongs to the MscL family. In terms of assembly, homopentamer.

The protein localises to the cell membrane. Its function is as follows. Channel that opens in response to stretch forces in the membrane lipid bilayer. May participate in the regulation of osmotic pressure changes within the cell. This Alkaliphilus oremlandii (strain OhILAs) (Clostridium oremlandii (strain OhILAs)) protein is Large-conductance mechanosensitive channel.